Reading from the N-terminus, the 405-residue chain is Phosphopentomutase (405 aa).

6 residues coordinate Mn(2+): Asp10, Asp303, His308, Asp344, His345, and His356.

This sequence belongs to the phosphopentomutase family. Mn(2+) serves as cofactor.

It localises to the cytoplasm. The catalysed reaction is 2-deoxy-alpha-D-ribose 1-phosphate = 2-deoxy-D-ribose 5-phosphate. It carries out the reaction alpha-D-ribose 1-phosphate = D-ribose 5-phosphate. It functions in the pathway carbohydrate degradation; 2-deoxy-D-ribose 1-phosphate degradation; D-glyceraldehyde 3-phosphate and acetaldehyde from 2-deoxy-alpha-D-ribose 1-phosphate: step 1/2. Its function is as follows. Isomerase that catalyzes the conversion of deoxy-ribose 1-phosphate (dRib-1-P) and ribose 1-phosphate (Rib-1-P) to deoxy-ribose 5-phosphate (dRib-5-P) and ribose 5-phosphate (Rib-5-P), respectively. The sequence is that of Phosphopentomutase from Shewanella loihica (strain ATCC BAA-1088 / PV-4).